A 156-amino-acid chain; its full sequence is Small ribosomal subunit protein uS7 (156 aa).

This sequence belongs to the universal ribosomal protein uS7 family. In terms of assembly, part of the 30S ribosomal subunit. Contacts proteins S9 and S11.

In terms of biological role, one of the primary rRNA binding proteins, it binds directly to 16S rRNA where it nucleates assembly of the head domain of the 30S subunit. Is located at the subunit interface close to the decoding center, probably blocks exit of the E-site tRNA. The sequence is that of Small ribosomal subunit protein uS7 from Prochlorococcus marinus (strain MIT 9211).